Reading from the N-terminus, the 124-residue chain is Small ribosomal subunit protein uS12 (124 aa).

The disordered stretch occupies residues 1–25 (MARINQLVRKPRRARAKKSDVPALE). Position 89 is a 3-methylthioaspartic acid (Asp-89). The interval 103–124 (DTAGVSGRRRGRSKYGEKKPKE) is disordered.

The protein belongs to the universal ribosomal protein uS12 family. As to quaternary structure, part of the 30S ribosomal subunit. Contacts proteins S8 and S17. May interact with IF1 in the 30S initiation complex.

Functionally, with S4 and S5 plays an important role in translational accuracy. Interacts with and stabilizes bases of the 16S rRNA that are involved in tRNA selection in the A site and with the mRNA backbone. Located at the interface of the 30S and 50S subunits, it traverses the body of the 30S subunit contacting proteins on the other side and probably holding the rRNA structure together. The combined cluster of proteins S8, S12 and S17 appears to hold together the shoulder and platform of the 30S subunit. In Coxiella burnetii (strain Dugway 5J108-111), this protein is Small ribosomal subunit protein uS12.